A 370-amino-acid chain; its full sequence is Putative agmatine deiminase (370 aa).

The active-site Amidino-cysteine intermediate is C361.

Belongs to the agmatine deiminase family.

The enzyme catalyses agmatine + H2O = N-carbamoylputrescine + NH4(+). This chain is Putative agmatine deiminase, found in Shewanella sp. (strain MR-7).